The sequence spans 283 residues: Pantothenate synthetase (283 aa).

30-37 provides a ligand contact to ATP; the sequence is MGCLHEGH. The Proton donor role is filled by histidine 37. (R)-pantoate is bound at residue glutamine 61. Glutamine 61 provides a ligand contact to beta-alanine. Residue 147-150 coordinates ATP; it reads GQKD. Residue glutamine 153 coordinates (R)-pantoate. ATP is bound by residues valine 176 and 184-187; that span reads KSSR.

Belongs to the pantothenate synthetase family. As to quaternary structure, homodimer.

It is found in the cytoplasm. The enzyme catalyses (R)-pantoate + beta-alanine + ATP = (R)-pantothenate + AMP + diphosphate + H(+). It participates in cofactor biosynthesis; (R)-pantothenate biosynthesis; (R)-pantothenate from (R)-pantoate and beta-alanine: step 1/1. Its function is as follows. Catalyzes the condensation of pantoate with beta-alanine in an ATP-dependent reaction via a pantoyl-adenylate intermediate. The polypeptide is Pantothenate synthetase (Clostridium novyi (strain NT)).